The sequence spans 375 residues: Eukaryotic translation initiation factor 3 subunit F (375 aa).

The MPN domain maps to 30–166 (VVIQPQALFS…TRAYISAPVG (137 aa)). Positions 307-375 (LGGESGSGES…EAQNGKEEKK (69 aa)) are disordered. Positions 323-332 (QRGGKGGRGG) are enriched in gly residues. Basic and acidic residues-rich tracts occupy residues 336 to 345 (TQERSGEEAR) and 358 to 375 (RSYEERTNEAQNGKEEKK).

The protein belongs to the eIF-3 subunit F family. As to quaternary structure, component of the eukaryotic translation initiation factor 3 (eIF-3) complex.

The protein resides in the cytoplasm. In terms of biological role, component of the eukaryotic translation initiation factor 3 (eIF-3) complex, which is involved in protein synthesis of a specialized repertoire of mRNAs and, together with other initiation factors, stimulates binding of mRNA and methionyl-tRNAi to the 40S ribosome. The eIF-3 complex specifically targets and initiates translation of a subset of mRNAs involved in cell proliferation. The sequence is that of Eukaryotic translation initiation factor 3 subunit F from Aspergillus niger (strain ATCC MYA-4892 / CBS 513.88 / FGSC A1513).